The following is a 212-amino-acid chain: Leucine efflux protein (212 aa).

6 consecutive transmembrane segments (helical) span residues 12 to 32 (TYLV…LFVL), 49 to 69 (GVFI…ATLI), 71 to 91 (TTPI…LYLG), 122 to 142 (ILSL…VQFI), 153 to 173 (FFIL…FLII), and 188 to 208 (LAKV…ARLA).

It belongs to the Rht family.

The protein resides in the cell inner membrane. It carries out the reaction L-leucine(in) + H(+)(out) = L-leucine(out) + H(+)(in). Its activity is regulated as follows. Leucine export is inhibited by the proton ionophore carbonyl cyanide m-chlorophenylhydrazone (CCCP). Its function is as follows. Exporter of leucine. Can also transport its natural analog L-alpha-amino-n-butyric acid and some other structurally unrelated amino acids. Leucine excretion is probably driven by proton motive force. The protein is Leucine efflux protein of Escherichia coli (strain K12).